The sequence spans 87 residues: MAILASICSIGNIKTNSSKLIINNISSQSSNMNYNIIQCNGPMSNSSGCGNSTGPIVGGVIINRGAVSGVLCIVGGVVNGLVGGGCN.

This is an uncharacterized protein from Dictyostelium discoideum (Social amoeba).